The chain runs to 306 residues: Flavin adenine dinucleotide synthase (306 aa).

FAD is bound by residues S59, I107, G164, 182-185, R190, and R300; that span reads DSNW.

This sequence belongs to the PAPS reductase family. FAD1 subfamily.

The protein resides in the cytoplasm. It carries out the reaction FMN + ATP + H(+) = FAD + diphosphate. It participates in cofactor biosynthesis; FAD biosynthesis; FAD from FMN: step 1/1. In terms of biological role, catalyzes the adenylation of flavin mononucleotide (FMN) to form flavin adenine dinucleotide (FAD) coenzyme. This chain is Flavin adenine dinucleotide synthase, found in Saccharomyces cerevisiae (strain ATCC 204508 / S288c) (Baker's yeast).